Here is a 37-residue protein sequence, read N- to C-terminus: Large ribosomal subunit protein bL36 (37 aa).

The protein belongs to the bacterial ribosomal protein bL36 family.

The chain is Large ribosomal subunit protein bL36 from Nostoc sp. (strain PCC 7120 / SAG 25.82 / UTEX 2576).